A 121-amino-acid chain; its full sequence is Ubiquitin-related modifier 1 (121 aa).

Residue Gly-121 is modified to 1-thioglycine. Residue Gly-121 forms a Glycyl lysine isopeptide (Gly-Lys) (interchain with K-? in acceptor proteins) linkage.

Belongs to the URM1 family. C-terminal thiocarboxylation occurs in 2 steps, it is first acyl-adenylated (-COAMP) via the hesA/moeB/thiF part of UBA4, then thiocarboxylated (-COSH) via the rhodanese domain of UBA4.

The protein resides in the cytoplasm. Its pathway is tRNA modification; 5-methoxycarbonylmethyl-2-thiouridine-tRNA biosynthesis. In terms of biological role, acts as a sulfur carrier required for 2-thiolation of mcm(5)S(2)U at tRNA wobble positions of cytosolic tRNA(Lys), tRNA(Glu) and tRNA(Gln). Serves as sulfur donor in tRNA 2-thiolation reaction by being thiocarboxylated (-COSH) at its C-terminus by the MOCS3 homolog UBA4. The sulfur is then transferred to tRNA to form 2-thiolation of mcm(5)S(2)U. Prior mcm(5) tRNA modification by the elongator complex is required for 2-thiolation. Also acts as a ubiquitin-like protein (UBL) that is covalently conjugated via an isopeptide bond to lysine residues of target proteins such as AHP1. The thiocarboxylated form serves as substrate for conjugation and oxidative stress specifically induces the formation of UBL-protein conjugates. The chain is Ubiquitin-related modifier 1 from Ajellomyces capsulatus (strain NAm1 / WU24) (Darling's disease fungus).